A 110-amino-acid chain; its full sequence is UPF0060 membrane protein Bamb_1160 (110 aa).

4 consecutive transmembrane segments (helical) span residues 9–29, 34–54, 66–86, and 88–108; these read ALFA…WLVL, PVWL…LLTL, YGGV…GVAL, and RWDA…ALQP.

Belongs to the UPF0060 family.

The protein resides in the cell inner membrane. In Burkholderia ambifaria (strain ATCC BAA-244 / DSM 16087 / CCUG 44356 / LMG 19182 / AMMD) (Burkholderia cepacia (strain AMMD)), this protein is UPF0060 membrane protein Bamb_1160.